The primary structure comprises 282 residues: Halorhodopsin (282 aa).

Over Met1–Gly29 the chain is Extracellular. Residues Asp30–Gly55 form a helical membrane-spanning segment. Over Arg56–Pro61 the chain is Cytoplasmic. A helical transmembrane segment spans residues Arg62–Val85. Residues Ser86–Pro109 are Extracellular-facing. Residues Trp110–Ala131 form a helical membrane-spanning segment. The Cytoplasmic portion of the chain corresponds to Gly132 to Asn134. A helical membrane pass occupies residues Ala135–Thr158. The Extracellular portion of the chain corresponds to Thr159–Ser161. Residues Tyr162–Leu184 form a helical membrane-spanning segment. The Cytoplasmic portion of the chain corresponds to Ala185 to Thr196. Residues Ala197–Leu220 traverse the membrane as a helical segment. The Extracellular portion of the chain corresponds to Gly221–Asp229. A helical transmembrane segment spans residues Val230–Asp258. At Lys245 the chain carries N6-(retinylidene)lysine. Residues Asn259 to Asp282 are Cytoplasmic-facing.

Belongs to the archaeal/bacterial/fungal opsin family.

The protein resides in the cell membrane. In terms of biological role, light-driven chloride pump. In Halorubrum sodomense, this protein is Halorhodopsin (hop).